Consider the following 222-residue polypeptide: Small ribosomal subunit protein uS3 (222 aa).

The KH type-2 domain maps to 38–106; the sequence is IRKFISEKLA…NVHINIVEIK (69 aa).

It belongs to the universal ribosomal protein uS3 family. As to quaternary structure, part of the 30S ribosomal subunit. Forms a tight complex with proteins S10 and S14.

In terms of biological role, binds the lower part of the 30S subunit head. Binds mRNA in the 70S ribosome, positioning it for translation. In Lactobacillus gasseri (strain ATCC 33323 / DSM 20243 / BCRC 14619 / CIP 102991 / JCM 1131 / KCTC 3163 / NCIMB 11718 / NCTC 13722 / AM63), this protein is Small ribosomal subunit protein uS3.